Reading from the N-terminus, the 469-residue chain is Glutamine synthetase (469 aa).

The region spanning 15–96 (EDVKFIDVRF…INFFIHDPIT (82 aa)) is the GS beta-grasp domain. Residues 104-469 (PRNVAKKAEA…PYEYEQYYDV (366 aa)) enclose the GS catalytic domain. The Mg(2+) site is built by glutamate 129 and glutamate 131. Glutamate 205 is an ATP binding site. Residues glutamate 210 and glutamate 218 each coordinate Mg(2+). An ATP-binding site is contributed by 221-223 (YKF). L-glutamate contacts are provided by residues 262-263 (NG) and glycine 263. Histidine 267 provides a ligand contact to Mg(2+). ATP is bound by residues 269 to 271 (HQS) and serine 271. Residues arginine 320, glutamate 326, and arginine 338 each coordinate L-glutamate. 3 residues coordinate ATP: arginine 338, arginine 343, and lysine 352. Glutamate 357 contacts Mg(2+). Arginine 359 contributes to the L-glutamate binding site. Tyrosine 397 carries the O-AMP-tyrosine modification.

Belongs to the glutamine synthetase family. Oligomer of 12 subunits arranged in the form of two hexagons. The cofactor is Mg(2+).

The protein resides in the cytoplasm. It carries out the reaction L-glutamate + NH4(+) + ATP = L-glutamine + ADP + phosphate + H(+). The activity of this enzyme could be controlled by adenylation under conditions of abundant glutamine. Functionally, catalyzes the ATP-dependent biosynthesis of glutamine from glutamate and ammonia. The sequence is that of Glutamine synthetase from Streptomyces viridochromogenes.